We begin with the raw amino-acid sequence, 289 residues long: Methionyl-tRNA formyltransferase (289 aa).

106–109 (SLLP) contacts (6S)-5,6,7,8-tetrahydrofolate.

The protein belongs to the Fmt family.

The enzyme catalyses L-methionyl-tRNA(fMet) + (6R)-10-formyltetrahydrofolate = N-formyl-L-methionyl-tRNA(fMet) + (6S)-5,6,7,8-tetrahydrofolate + H(+). Attaches a formyl group to the free amino group of methionyl-tRNA(fMet). The formyl group appears to play a dual role in the initiator identity of N-formylmethionyl-tRNA by promoting its recognition by IF2 and preventing the misappropriation of this tRNA by the elongation apparatus. This is Methionyl-tRNA formyltransferase from Mycoplasmopsis pulmonis (strain UAB CTIP) (Mycoplasma pulmonis).